Here is a 559-residue protein sequence, read N- to C-terminus: GTP diphosphokinase CRSH2, chloroplastic (559 aa).

The transit peptide at 1–37 (MASAGGEVVVVDPAAAAVAPDVEHHAPAPRLTPAGSG) directs the protein to the chloroplast. The HD domain maps to 87–187 (SLARALIVAA…LELAIRLDAM (101 aa)). EF-hand domains are found at residues 449 to 484 (ASAG…LGAG) and 486 to 518 (KDAE…VELK). Residues Asp462, Asn464, Asp466, Arg468, Glu473, Asp496, Asn498, Asp500, Ser502, and Glu507 each coordinate Ca(2+).

This sequence belongs to the RelA/SpoT family. Expressed in shoots.

It localises to the plastid. The protein localises to the chloroplast. It catalyses the reaction GTP + ATP = guanosine 3'-diphosphate 5'-triphosphate + AMP. Its activity is regulated as follows. Activated by calcium. In terms of biological role, possesses calcium-dependent ppGpp (guanosine 3'-diphosphate 5'-diphosphate) synthetase activity in vitro and is able to functionally complement E.coli relA mutants. May be involved in a rapid plant ppGpp-mediated response to pathogens and other stresses. The chain is GTP diphosphokinase CRSH2, chloroplastic from Oryza sativa subsp. japonica (Rice).